Reading from the N-terminus, the 131-residue chain is Sulfurtransferase TusD (131 aa).

Cys-81 (cysteine persulfide intermediate) is an active-site residue.

The protein belongs to the DsrE/TusD family. As to quaternary structure, heterohexamer, formed by a dimer of trimers. The hexameric TusBCD complex contains 2 copies each of TusB, TusC and TusD. The TusBCD complex interacts with TusE.

The protein resides in the cytoplasm. Functionally, part of a sulfur-relay system required for 2-thiolation of 5-methylaminomethyl-2-thiouridine (mnm(5)s(2)U) at tRNA wobble positions. Accepts sulfur from TusA and transfers it in turn to TusE. In Yersinia pseudotuberculosis serotype O:1b (strain IP 31758), this protein is Sulfurtransferase TusD.